Consider the following 329-residue polypeptide: GTP 3',8-cyclase (329 aa).

Residues 8–234 (AFARKFYYLR…QLRQRSDGPA (227 aa)) enclose the Radical SAM core domain. Arg17 serves as a coordination point for GTP. The [4Fe-4S] cluster site is built by Cys24 and Cys28. Tyr30 serves as a coordination point for S-adenosyl-L-methionine. Cys31 lines the [4Fe-4S] cluster pocket. Arg68 contributes to the GTP binding site. Residue Gly72 participates in S-adenosyl-L-methionine binding. Thr99 is a GTP binding site. Position 123 (Ser123) interacts with S-adenosyl-L-methionine. Position 160 (Lys160) interacts with GTP. An S-adenosyl-L-methionine-binding site is contributed by Met194. [4Fe-4S] cluster-binding residues include Cys257 and Cys260. Residue 262–264 (RLR) participates in GTP binding. [4Fe-4S] cluster is bound at residue Cys274.

The protein belongs to the radical SAM superfamily. MoaA family. As to quaternary structure, monomer and homodimer. It depends on [4Fe-4S] cluster as a cofactor.

The catalysed reaction is GTP + AH2 + S-adenosyl-L-methionine = (8S)-3',8-cyclo-7,8-dihydroguanosine 5'-triphosphate + 5'-deoxyadenosine + L-methionine + A + H(+). Its pathway is cofactor biosynthesis; molybdopterin biosynthesis. Its function is as follows. Catalyzes the cyclization of GTP to (8S)-3',8-cyclo-7,8-dihydroguanosine 5'-triphosphate. The sequence is that of GTP 3',8-cyclase from Escherichia coli O139:H28 (strain E24377A / ETEC).